We begin with the raw amino-acid sequence, 327 residues long: Zinc transport protein ZntB (327 aa).

At 1 to 271 (MDVVAGKALQ…AMNRRTYTMS (271 aa)) the chain is on the cytoplasmic side. A helical membrane pass occupies residues 272–292 (LLAMVFLPTTFLTGLFGVNLG). Residues 293–300 (GIPGNTDS) are Periplasmic-facing. The helical transmembrane segment at 301-321 (FGFATFCMMLVVLVLGVAWWL) threads the bilayer. Over 322-327 (KHSKWL) the chain is Cytoplasmic.

This sequence belongs to the CorA metal ion transporter (MIT) (TC 1.A.35) family.

The protein resides in the cell inner membrane. The enzyme catalyses Zn(2+)(out) + H(+)(out) = Zn(2+)(in) + H(+)(in). Functionally, zinc transporter. Acts as a Zn(2+):proton symporter, which likely mediates zinc ion uptake. This is Zinc transport protein ZntB from Yersinia enterocolitica serotype O:8 / biotype 1B (strain NCTC 13174 / 8081).